Here is a 304-residue protein sequence, read N- to C-terminus: Coenzyme PQQ synthesis protein B (304 aa).

Belongs to the PqqB family.

The protein operates within cofactor biosynthesis; pyrroloquinoline quinone biosynthesis. Functionally, may be involved in the transport of PQQ or its precursor to the periplasm. This is Coenzyme PQQ synthesis protein B from Pseudomonas aeruginosa (strain UCBPP-PA14).